Reading from the N-terminus, the 329-residue chain is NAC domain-containing protein 79 (329 aa).

The region spanning 17–167 (LPPGFRFHPT…EWVICRVFHK (151 aa)) is the NAC domain. A DNA-binding region spans residues 114–173 (VGMKKTLVFYRGRAPKGQKTNWVMHEYRLDGKLSAHNLPKTAKNEWVICRVFHKTAGGKK).

Expressed at low levels in leaves.

The protein resides in the nucleus. In Arabidopsis thaliana (Mouse-ear cress), this protein is NAC domain-containing protein 79.